Reading from the N-terminus, the 1065-residue chain is DNA-directed RNA polymerase subunit beta (1065 aa).

This sequence belongs to the RNA polymerase beta chain family. In plastids the minimal PEP RNA polymerase catalytic core is composed of four subunits: alpha, beta, beta', and beta''. When a (nuclear-encoded) sigma factor is associated with the core the holoenzyme is formed, which can initiate transcription.

The protein resides in the plastid. It localises to the chloroplast. It catalyses the reaction RNA(n) + a ribonucleoside 5'-triphosphate = RNA(n+1) + diphosphate. In terms of biological role, DNA-dependent RNA polymerase catalyzes the transcription of DNA into RNA using the four ribonucleoside triphosphates as substrates. This Marchantia polymorpha (Common liverwort) protein is DNA-directed RNA polymerase subunit beta.